We begin with the raw amino-acid sequence, 278 residues long: Release factor glutamine methyltransferase (278 aa).

S-adenosyl-L-methionine-binding positions include 117–121 (GTGSG), aspartate 140, and asparagine 184. 184-187 (NPPY) contributes to the substrate binding site.

The protein belongs to the protein N5-glutamine methyltransferase family. PrmC subfamily.

It catalyses the reaction L-glutaminyl-[peptide chain release factor] + S-adenosyl-L-methionine = N(5)-methyl-L-glutaminyl-[peptide chain release factor] + S-adenosyl-L-homocysteine + H(+). Functionally, methylates the class 1 translation termination release factors RF1/PrfA and RF2/PrfB on the glutamine residue of the universally conserved GGQ motif. This is Release factor glutamine methyltransferase from Staphylococcus aureus (strain NCTC 8325 / PS 47).